The primary structure comprises 465 residues: UPF0422 protein CBU_0937 (465 aa).

An N-terminal signal peptide occupies residues 1–23 (MTSKLVISALGLCVSGALSTTLA). Positions 28–60 (TTNQQITKRIDYLQAQINELRTQQKKERQKKKA) form a coiled coil.

The protein belongs to the UPF0422 family.

The protein is UPF0422 protein CBU_0937 of Coxiella burnetii (strain RSA 493 / Nine Mile phase I).